Here is a 564-residue protein sequence, read N- to C-terminus: Putative ABC transporter ATP-binding protein PBPRA2240 (564 aa).

ABC transporter domains are found at residues 3 to 244 (IEFS…GIRE) and 299 to 533 (LTVN…ANLT). ATP contacts are provided by residues 37 to 44 (GPSGSGKS) and 332 to 339 (GKNGSGKS).

Belongs to the ABC transporter superfamily.

It localises to the cell inner membrane. Functionally, probably part of an ABC transporter complex. Responsible for energy coupling to the transport system. This Photobacterium profundum (strain SS9) protein is Putative ABC transporter ATP-binding protein PBPRA2240.